Here is a 251-residue protein sequence, read N- to C-terminus: Probable phosphatase Sputw3181_2734 (251 aa).

Zn(2+) contacts are provided by His8, His10, His16, His41, Glu74, His102, His132, Asp193, and His195.

Belongs to the PHP family. Requires Zn(2+) as cofactor.

This Shewanella sp. (strain W3-18-1) protein is Probable phosphatase Sputw3181_2734.